The sequence spans 1040 residues: Activated CDC42 kinase 1 (1040 aa).

The interval 1–110 (MQPEEGTGWL…PSPTPGGLAG (110 aa)) is SAM-like domain. Residues 86–109 (EAEFPSHHSQSTFRKPSPTPGGLA) form a disordered region. Threonine 113 is subject to Phosphothreonine. The Protein kinase domain maps to 126–385 (LRLLEKLGDG…PTFVALRDFL (260 aa)). Residues 132–140 (LGDGSFGVV) and lysine 158 contribute to the ATP site. Aspartate 252 serves as the catalytic Proton acceptor. Tyrosine 284 carries the phosphotyrosine; by SRC and autocatalysis modification. The 61-residue stretch at 388–448 (AQPTDMRALQ…PRNVVTSVAG (61 aa)) folds into the SH3 domain. Residues 505 to 527 (RPTQHLGRMKKPTYDPVSEDPDP) are disordered. Tyrosine 518 carries the post-translational modification Phosphotyrosine. Positions 623–652 (DWDARPLPPPPAYDDVAQDEDDFEVCSINS) are required for interaction with SRC. The interval 632–635 (PPAY) is required for interaction with NEDD4. The disordered stretch occupies residues 722–824 (TGQLTPSPTP…MPTTQSFASD (103 aa)). The EBD domain stretch occupies residues 733 to 876 (GDDKPQVPPR…PYLERYQRFL (144 aa)). 2 stretches are compositionally biased toward pro residues: residues 738–749 (QVPPRVPIPPRP) and 772–783 (PSSPPRVPPREP). The span at 802-812 (PLPHRLSSSPG) shows a compositional bias: low complexity. At tyrosine 827 the chain carries Phosphotyrosine. Arginine 839 carries the post-translational modification Omega-N-methylarginine. A phosphotyrosine mark is found at tyrosine 859 and tyrosine 872. Position 881 is a phosphoserine (serine 881). Residues 881–957 (SPEEPAALPV…CPGDGQEAAR (77 aa)) are disordered. Over residues 888 to 903 (LPVPPLLPPPSTPAPA) the composition is skewed to pro residues. A compositionally biased stretch (polar residues) spans 922-931 (NFSTNNSNPG). Residues 958 to 998 (PADKVQMLQAMVHGVTTEECQAALRSHSWSIQRAAQYLKVE) enclose the UBA domain.

Belongs to the protein kinase superfamily. Tyr protein kinase family. As to quaternary structure, homodimer. Interacts with CDC42. Interacts with CSPG4 (activated). Interacts with MERTK (activated); stimulates autophosphorylation. May interact (phosphorylated) with HSP90AB1; maintains kinase activity. Interacts with NPHP1. Interacts with SNX9 (via SH3 domain). Interacts with SRC (via SH2 and SH3 domain). Interacts with EGFR, and this interaction is dependent on EGF stimulation and kinase activity of EGFR. Interacts (via kinase domain) with AKT1. Part of a collagen stimulated complex involved in cell migration composed of CDC42, CRK, TNK2 and BCAR1/p130cas. Interacts with BCAR1/p130cas via SH3 domains. Forms complexes with GRB2 and numerous receptor tyrosine kinases (RTK) including LTK, AXL or PDGFRL, in which GRB2 promotes RTK recruitment by TNK2. Interacts with NEDD4 (via WW3 domain). NEDD4L and EGF promote association with NEDD4. It depends on Mg(2+) as a cofactor. Post-translationally, autophosphorylation regulates kinase activity. Phosphorylation on Tyr-518 is required for interaction with SRC and is observed during association with clathrin-coated pits. In terms of processing, polyubiquitinated by NEDD4 and NEDD4L. Degradation can be induced by EGF and is lysosome-dependent.

The protein localises to the cell membrane. It is found in the nucleus. The protein resides in the endosome. It localises to the cell junction. Its subcellular location is the adherens junction. The protein localises to the cytoplasmic vesicle membrane. It is found in the cytoplasmic vesicle. The protein resides in the clathrin-coated vesicle. It localises to the membrane. Its subcellular location is the clathrin-coated pit. The protein localises to the cytoplasm. It is found in the cytosol. The enzyme catalyses L-tyrosyl-[protein] + ATP = O-phospho-L-tyrosyl-[protein] + ADP + H(+). It catalyses the reaction L-seryl-[protein] + ATP = O-phospho-L-seryl-[protein] + ADP + H(+). The catalysed reaction is L-threonyl-[protein] + ATP = O-phospho-L-threonyl-[protein] + ADP + H(+). Its function is as follows. Non-receptor tyrosine-protein and serine/threonine-protein kinase that is implicated in cell spreading and migration, cell survival, cell growth and proliferation. Transduces extracellular signals to cytosolic and nuclear effectors. Phosphorylates AKT1, AR, MCF2, WASL and WWOX. Implicated in trafficking and clathrin-mediated endocytosis through binding to epidermal growth factor receptor (EGFR) and clathrin. Binds to both poly- and mono-ubiquitin and regulates ligand-induced degradation of EGFR, thereby contributing to the accumulation of EGFR at the limiting membrane of early endosomes. Downstream effector of CDC42 which mediates CDC42-dependent cell migration via phosphorylation of BCAR1. May be involved both in adult synaptic function and plasticity and in brain development. Activates AKT1 by phosphorylating it on 'Tyr-176'. Phosphorylates AR on 'Tyr-267' and 'Tyr-363', thereby promoting its recruitment to androgen-responsive enhancers (AREs). Phosphorylates WWOX on 'Tyr-287'. Phosphorylates MCF2, thereby enhancing its activity as a guanine nucleotide exchange factor (GEF) toward Rho family proteins. Contributes to the control of AXL receptor levels. Confers metastatic properties on cancer cells and promotes tumor growth by negatively regulating tumor suppressor such as WWOX and positively regulating pro-survival factors such as AKT1 and AR. The protein is Activated CDC42 kinase 1 of Rattus norvegicus (Rat).